Here is a 500-residue protein sequence, read N- to C-terminus: Lysine--tRNA ligase (500 aa).

Mg(2+)-binding residues include Glu-410 and Glu-417.

This sequence belongs to the class-II aminoacyl-tRNA synthetase family. Homodimer. Mg(2+) is required as a cofactor.

The protein resides in the cytoplasm. The enzyme catalyses tRNA(Lys) + L-lysine + ATP = L-lysyl-tRNA(Lys) + AMP + diphosphate. This chain is Lysine--tRNA ligase, found in Shewanella oneidensis (strain ATCC 700550 / JCM 31522 / CIP 106686 / LMG 19005 / NCIMB 14063 / MR-1).